The chain runs to 737 residues: Catalase-peroxidase (737 aa).

The first 23 residues, methionine 1 to alanine 23, serve as a signal peptide directing secretion. Residues tryptophan 102–tyrosine 223 constitute a cross-link (tryptophyl-tyrosyl-methioninium (Trp-Tyr) (with M-249)). Histidine 103 acts as the Proton acceptor in catalysis. Residues tyrosine 223–methionine 249 constitute a cross-link (tryptophyl-tyrosyl-methioninium (Tyr-Met) (with W-102)). Heme b is bound at residue histidine 264.

This sequence belongs to the peroxidase family. Peroxidase/catalase subfamily. In terms of assembly, homodimer or homotetramer. It depends on heme b as a cofactor. In terms of processing, formation of the three residue Trp-Tyr-Met cross-link is important for the catalase, but not the peroxidase activity of the enzyme.

It catalyses the reaction H2O2 + AH2 = A + 2 H2O. The enzyme catalyses 2 H2O2 = O2 + 2 H2O. Functionally, bifunctional enzyme with both catalase and broad-spectrum peroxidase activity. This is Catalase-peroxidase from Yersinia pseudotuberculosis serotype I (strain IP32953).